Consider the following 493-residue polypeptide: MFS-type transporter efuF (493 aa).

Helical transmembrane passes span 90–110 (ITLVLFYVTFCLLDVPANMLL), 117–137 (IMLPTLMMGWGSMTLIQCAVH), 147–167 (LLMGAFEAGFMAGVVYYLTTF), 179–199 (IFYGAATIAGAFSGLLAYGVF), 211–231 (FLMIIEGSATILLASFAYWHL), 279–299 (IALYAVIGISYGVASASVGNF), 316–336 (LYTVAPYCVGCVILLAQCTSS), 343–363 (STHLAGAMLLTFVGFILLITL), 370–390 (GPTYFACFLLAAGAFTPSCIF), 406–426 (AVTGFMVGASNSGGIISSLAF), and 435–455 (IPALIVTATFQGVGIVLVLGF).

This sequence belongs to the major facilitator superfamily.

It localises to the membrane. Functionally, MFS-type transporter; part of the gene cluster that mediates the biosynthesis of enfumafungin, a glycosylated fernene-type triterpenoid with potent antifungal activity, mediated by its interaction with beta-1,3-glucan synthase and the fungal cell wall. Might facilitate the transport of glucose units to the subcellular site of enfumafungin biosynthesis. The chain is MFS-type transporter efuF from Hormonema carpetanum.